The chain runs to 546 residues: (-)-5-epieremophilene synthase STPS3 (546 aa).

Mg(2+) is bound by residues aspartate 299, aspartate 303, aspartate 442, threonine 446, and glutamate 450. The DDXXD motif signature appears at 299 to 303 (DDTYD).

Belongs to the terpene synthase family. Tpsa subfamily. As to quaternary structure, monomer. Mg(2+) is required as a cofactor. Highly expressed in flowers and at lower levels in leaves.

It carries out the reaction (2E,6E)-farnesyl diphosphate = (-)-5-epi-eremophilene + diphosphate. It functions in the pathway secondary metabolite biosynthesis; terpenoid biosynthesis. Its function is as follows. Sesquiterpene synthase that catalyzes the conversion of farnesyl diphosphate to (-)-5-epi-eremophilene. In Salvia miltiorrhiza (Chinese sage), this protein is (-)-5-epieremophilene synthase STPS3.